A 64-amino-acid polypeptide reads, in one-letter code: Large ribosomal subunit protein bL33c (64 aa).

Belongs to the bacterial ribosomal protein bL33 family.

It localises to the plastid. The protein localises to the cyanelle. The protein is Large ribosomal subunit protein bL33c (rpl33) of Cyanophora paradoxa.